An 868-amino-acid polypeptide reads, in one-letter code: DNA mismatch repair protein MutS (868 aa).

620-627 is an ATP binding site; sequence GPNMGGKS.

Belongs to the DNA mismatch repair MutS family.

In terms of biological role, this protein is involved in the repair of mismatches in DNA. It is possible that it carries out the mismatch recognition step. This protein has a weak ATPase activity. In Xylella fastidiosa (strain 9a5c), this protein is DNA mismatch repair protein MutS.